A 317-amino-acid polypeptide reads, in one-letter code: DNA-directed RNA polymerase subunit alpha (317 aa).

Positions 1 to 234 are alpha N-terminal domain (alpha-NTD); sequence MKQFVRPEFI…AHLEFFIDLN (234 aa). The tract at residues 249–317 is alpha C-terminal domain (alpha-CTD); sequence DDKELDRTVE…ASLGLAFRQS (69 aa).

It belongs to the RNA polymerase alpha chain family. In terms of assembly, homodimer. The RNAP catalytic core consists of 2 alpha, 1 beta, 1 beta' and 1 omega subunit. When a sigma factor is associated with the core the holoenzyme is formed, which can initiate transcription.

The catalysed reaction is RNA(n) + a ribonucleoside 5'-triphosphate = RNA(n+1) + diphosphate. Functionally, DNA-dependent RNA polymerase catalyzes the transcription of DNA into RNA using the four ribonucleoside triphosphates as substrates. The chain is DNA-directed RNA polymerase subunit alpha from Mycoplasma capricolum subsp. capricolum (strain California kid / ATCC 27343 / NCTC 10154).